Reading from the N-terminus, the 97-residue chain is uncharacterized protein (97 aa).

Residues 27-50 (IGESEDKTNSRGQPATMKEDEVED) are disordered.

This is an uncharacterized protein from Caldicellulosiruptor saccharolyticus (Caldocellum saccharolyticum).